We begin with the raw amino-acid sequence, 147 residues long: uncharacterized protein (147 aa).

This is an uncharacterized protein from Acidianus convivator (ATV).